The chain runs to 417 residues: Actin-related protein 10 (417 aa).

It belongs to the actin family. As to quaternary structure, subunit of dynactin, a multiprotein complex part of a tripartite complex with dynein and a adapter, such as BICDL1, BICD2 or HOOK3. The dynactin complex is built around ACTR1A/ACTB filament and consists of an actin-related filament composed of a shoulder domain, a pointed end and a barbed end. Its length is defined by its flexible shoulder domain. The soulder is composed of 2 DCTN1 subunits, 4 DCTN2 and 2 DCTN3. The 4 DCNT2 (via N-terminus) bind the ACTR1A filament and act as molecular rulers to determine the length. The pointed end is important for binding dynein-dynactin cargo adapters. Consists of 4 subunits: ACTR10, DCNT4, DCTN5 and DCTN6. The barbed end is composed of a CAPZA1:CAPZB heterodimers, which binds ACTR1A/ACTB filament and dynactin and stabilizes dynactin.

It is found in the cytoplasm. The protein localises to the cytoskeleton. Functionally, part of the dynactin complex that activates the molecular motor dynein for ultra-processive transport along microtubules. This Mus musculus (Mouse) protein is Actin-related protein 10 (Actr10).